The chain runs to 671 residues: MALSVNDCARLTGQSVPTMEHFLPLRNIWNRVRDFPRASTTAAGITWMSRYIYGYHRLMLEDLAPGAPATLRWPLYRQPPPHFLVGYQYLVRTCNDYVFDSRAYSRLRYTELSQPGHQTVNWSVMANCTYTINTGAYHRFVDMDDFQSTLTQVQQAILAERVVADLALLQPMRGFGVTRMGGRGRHLRPNSAAAAAIDARDAGQEEGEEEVPVERLMQDYYKDLRRCQNEAWGMADRLRIQQAGPKDMVLLSTIRRLKTAYFNYIISSTSARNNPDRRPLPPATVLSLPCDCDWLDAFLERFSDPVDADSLRSLGGGVPTQQLLRCIVSAVSLPHGSPPPTHNRDMTGGVFQLRPRENGRAVTETMRRRRGEMIERFVDRLPVRRRRRRVPPPPPPPEEEEGEALMEEEIEEEEEAPVAFEREVRDTVAELIRLLEEELTVSARNSQFFNFAVDFYEAMERLEALGDINESTLRRWVMYFFVAEHTATTLNYLFQRLRNYAVFARHVELNLAQVVMRARDAEGGVVYSRVWNEGGLNAFSQLMARISNDLAATVERAGRGDLQEEEIEQFMAEIAYQDNSGDVQEILRQAAVNDTEIDSVELSFRLKLTGPVVFTQRRQIQEINRRVVAFASNLRAQHQLLPARGADVPLPPLPAGPEPPLPPGARPRHRF.

Positions 380–389 (RLPVRRRRRR) match the Nuclear localization signal motif. The tract at residues 386 to 411 (RRRRVPPPPPPPEEEEGEALMEEEIE) is disordered. Positions 397–411 (PEEEEGEALMEEEIE) are enriched in acidic residues. At serine 580 the chain carries O-(5'-phospho-DNA)-serine. The segment at 645-671 (GADVPLPPLPAGPEPPLPPGARPRHRF) is disordered. Positions 649–665 (PLPPLPAGPEPPLPPGA) are enriched in pro residues.

Belongs to the adenoviridae terminal protein family. As to quaternary structure, heterodimer with the polymerase; this heterodimer binds to bp 9 to 18 of the genome. Interacts with host POU2F1; POU2F1 binds to the auxiliary sequences in the inverted terminal repeats and tethers the pTP-POL heterodimer to the origin DNA thereby participating in the assembly of the pre-initiation complex (POL-TP-DBP-NFIA-POU2F1). In terms of processing, preterminal protein is used to replicate viral genome, upon genomic encapsidation it is processed first into iTP and finally into TP by adenovirus protease.

It is found in the host nucleus matrix. Protein covalently bound to the viral DNA that acts as a primer for viral genomic replication by DNA strand displacement. Assembles on the viral origin of replication in an initiation complex with viral polymerase, DBP, host NFIA and host POU2F1/OCT1. During initiation, the polymerase covalently couples the first dCTP with Ser-580 of pTP. The terminal protein stimulates the template activity over 20 fold compared to protein-free templates. Neo-synthesized viral genomes are linked to two preterminal proteins, one for each 5' end. These new genomes are encapsidated in the nucleus, and during capsid maturation by viral protease, preterminal protein is first cleaved into intermediary (iTP), then into mature TP. May play a role in host nuclear matrix localization of genomic DNA. The chain is Preterminal protein from Human adenovirus C serotype 5 (HAdV-5).